Reading from the N-terminus, the 187-residue chain is Preprocaerulein clone PXC202 (187 aa).

The propeptide occupies 1–9 (NDERRFADG). The tract at residues 1-21 (NDERRFADGQQDYTGWMDFGR) is disordered. Tyr13 carries the sulfotyrosine modification. Residue Phe19 is modified to Phenylalanine amide. A propeptide spanning residues 23-73 (DDEDDVNERDVRGFGSFLGKALKAALKIGANALGGSPQQREANDERRFADG) is cleaved from the precursor. Tyr77 carries the sulfotyrosine modification. Phe83 is subject to Phenylalanine amide. A propeptide spanning residues 87 to 137 (DDEDDVNERDVRGFGSFLGKALKAALKIGANALGGSLQQREVNDERRFADG) is cleaved from the precursor. Residue Tyr141 is modified to Sulfotyrosine. Phenylalanine amide is present on Phe147. A propeptide spanning residues 151 to 152 (DG) is cleaved from the precursor. Position 156 is a sulfotyrosine (Tyr156). Phe162 carries the phenylalanine amide modification. Residues 166 to 187 (DDEDDVHERDVRGFGSFLGKAL) constitute a propeptide that is removed on maturation.

This sequence belongs to the gastrin/cholecystokinin family. As to expression, expressed by the skin glands.

Its subcellular location is the secreted. In terms of biological role, the pharmacological activities of caerulein are quite similar to the physiological activities of gastrin and related peptides. This is Preprocaerulein clone PXC202 from Xenopus laevis (African clawed frog).